Consider the following 130-residue polypeptide: Small ribosomal subunit protein uS11 (130 aa).

The protein belongs to the universal ribosomal protein uS11 family. Part of the 30S ribosomal subunit. Interacts with proteins S7 and S18. Binds to IF-3.

Its function is as follows. Located on the platform of the 30S subunit, it bridges several disparate RNA helices of the 16S rRNA. Forms part of the Shine-Dalgarno cleft in the 70S ribosome. The chain is Small ribosomal subunit protein uS11 from Moorella thermoacetica (strain ATCC 39073 / JCM 9320).